The primary structure comprises 248 residues: Probable phosphatase VPA0505 (248 aa).

9 residues coordinate Zn(2+): His8, His10, His16, His41, Glu74, His102, His132, Asp194, and His196.

The protein belongs to the PHP family. Zn(2+) is required as a cofactor.

This chain is Probable phosphatase VPA0505, found in Vibrio parahaemolyticus serotype O3:K6 (strain RIMD 2210633).